The primary structure comprises 89 residues: Small ribosomal subunit protein uS15 (89 aa).

The protein belongs to the universal ribosomal protein uS15 family. As to quaternary structure, part of the 30S ribosomal subunit. Forms a bridge to the 50S subunit in the 70S ribosome, contacting the 23S rRNA.

Its function is as follows. One of the primary rRNA binding proteins, it binds directly to 16S rRNA where it helps nucleate assembly of the platform of the 30S subunit by binding and bridging several RNA helices of the 16S rRNA. Functionally, forms an intersubunit bridge (bridge B4) with the 23S rRNA of the 50S subunit in the ribosome. The chain is Small ribosomal subunit protein uS15 from Nitratidesulfovibrio vulgaris (strain DP4) (Desulfovibrio vulgaris).